The following is a 231-amino-acid chain: Orotidine 5'-phosphate decarboxylase (231 aa).

Residues aspartate 11, lysine 33, 60–69 (DLKFHDIPNT), threonine 120, arginine 181, glutamine 190, glycine 210, and arginine 211 each bind substrate. The active-site Proton donor is lysine 62.

Belongs to the OMP decarboxylase family. Type 1 subfamily. As to quaternary structure, homodimer.

It carries out the reaction orotidine 5'-phosphate + H(+) = UMP + CO2. Its pathway is pyrimidine metabolism; UMP biosynthesis via de novo pathway; UMP from orotate: step 2/2. Catalyzes the decarboxylation of orotidine 5'-monophosphate (OMP) to uridine 5'-monophosphate (UMP). This Vibrio cholerae serotype O1 (strain ATCC 39315 / El Tor Inaba N16961) protein is Orotidine 5'-phosphate decarboxylase.